Reading from the N-terminus, the 289-residue chain is Shikimate dehydrogenase (NADP(+)) (289 aa).

Residues 22–24 (SRS) and threonine 69 each bind shikimate. Lysine 73 acts as the Proton acceptor in catalysis. Glutamate 85 contributes to the NADP(+) binding site. Residues asparagine 94 and aspartate 109 each coordinate shikimate. Residues 134 to 138 (GAGGA), 158 to 163 (NRTLSR), and isoleucine 226 each bind NADP(+). Tyrosine 228 contributes to the shikimate binding site. Residue glycine 249 coordinates NADP(+).

It belongs to the shikimate dehydrogenase family. In terms of assembly, homodimer.

The enzyme catalyses shikimate + NADP(+) = 3-dehydroshikimate + NADPH + H(+). Its pathway is metabolic intermediate biosynthesis; chorismate biosynthesis; chorismate from D-erythrose 4-phosphate and phosphoenolpyruvate: step 4/7. Functionally, involved in the biosynthesis of the chorismate, which leads to the biosynthesis of aromatic amino acids. Catalyzes the reversible NADPH linked reduction of 3-dehydroshikimate (DHSA) to yield shikimate (SA). This chain is Shikimate dehydrogenase (NADP(+)), found in Brucella melitensis biotype 2 (strain ATCC 23457).